A 309-amino-acid polypeptide reads, in one-letter code: ADP-L-glycero-D-manno-heptose-6-epimerase (309 aa).

NADP(+) contacts are provided by residues 10-11, 31-32, K38, K53, 75-79, and N92; these read LI, DN, and QGACS. Residue Y139 is the Proton acceptor of the active site. K143 serves as a coordination point for NADP(+). N168 is a substrate binding site. NADP(+) contacts are provided by V169 and K177. K177 functions as the Proton acceptor in the catalytic mechanism. Substrate is bound by residues S179, H186, 200–203, R208, and Y271; that span reads FAGS.

This sequence belongs to the NAD(P)-dependent epimerase/dehydratase family. HldD subfamily. In terms of assembly, homopentamer. NADP(+) serves as cofactor.

The enzyme catalyses ADP-D-glycero-beta-D-manno-heptose = ADP-L-glycero-beta-D-manno-heptose. Its pathway is nucleotide-sugar biosynthesis; ADP-L-glycero-beta-D-manno-heptose biosynthesis; ADP-L-glycero-beta-D-manno-heptose from D-glycero-beta-D-manno-heptose 7-phosphate: step 4/4. Catalyzes the interconversion between ADP-D-glycero-beta-D-manno-heptose and ADP-L-glycero-beta-D-manno-heptose via an epimerization at carbon 6 of the heptose. This chain is ADP-L-glycero-D-manno-heptose-6-epimerase, found in Histophilus somni (strain 2336) (Haemophilus somnus).